Here is an 89-residue protein sequence, read N- to C-terminus: Small ribosomal subunit protein uS15 (89 aa).

The protein belongs to the universal ribosomal protein uS15 family. As to quaternary structure, part of the 30S ribosomal subunit. Forms a bridge to the 50S subunit in the 70S ribosome, contacting the 23S rRNA.

In terms of biological role, one of the primary rRNA binding proteins, it binds directly to 16S rRNA where it helps nucleate assembly of the platform of the 30S subunit by binding and bridging several RNA helices of the 16S rRNA. Forms an intersubunit bridge (bridge B4) with the 23S rRNA of the 50S subunit in the ribosome. The polypeptide is Small ribosomal subunit protein uS15 (Polynucleobacter asymbioticus (strain DSM 18221 / CIP 109841 / QLW-P1DMWA-1) (Polynucleobacter necessarius subsp. asymbioticus)).